Consider the following 896-residue polypeptide: Sodium/hydrogen exchanger 5 (896 aa).

The Cytoplasmic portion of the chain corresponds to Met1–Glu45. A helical membrane pass occupies residues Ala46–Leu66. Topologically, residues Ser67–Leu73 are extracellular. The helical transmembrane segment at Val74–Val94 threads the bilayer. The Cytoplasmic segment spans residues Ala95–Glu103. The chain crosses the membrane as a helical span at residues Pro104 to Pro124. The Extracellular segment spans residues Ser125–Ala134. A helical membrane pass occupies residues Ile135–Trp155. At Gly156–Asp173 the chain is on the cytoplasmic side. Residues Phe174–Glu194 traverse the membrane as a helical segment. The Extracellular segment spans residues Glu195 to Glu200. A glycan (N-linked (GlcNAc...) asparagine) is linked at Asn199. The helical transmembrane segment at Thr201–Tyr221 threads the bilayer. Over Lys222–Ser246 the chain is Cytoplasmic. The helical transmembrane segment at Leu247–Leu267 threads the bilayer. Topologically, residues Thr268–Arg276 are extracellular. A helical membrane pass occupies residues Ile277–Ala297. At Ser298–Thr331 the chain is on the cytoplasmic side. A helical transmembrane segment spans residues Met332–Val352. At Asp353–Asp360 the chain is on the extracellular side. The helical transmembrane segment at Ser361–Leu381 threads the bilayer. Residues Gln382 to Asp398 lie on the Cytoplasmic side of the membrane. A helical transmembrane segment spans residues Gln399–Leu419. Residues Asp420–Asp428 are Extracellular-facing. The helical transmembrane segment at Tyr429–Ile449 threads the bilayer. The Cytoplasmic portion of the chain corresponds to Lys450 to Leu896. Residues Gly576 to Gly721 form a required for interaction with ARRB2 region. Disordered stretches follow at residues Thr658–Arg686, Glu701–Glu720, and His818–Glu864. Positions Ser660 to Lys672 are enriched in basic residues. Residues Glu854–Glu864 are compositionally biased toward polar residues.

The protein belongs to the monovalent cation:proton antiporter 1 (CPA1) transporter (TC 2.A.36) family. Interacts with CHP1 and CHP2. Interacts with ARRB2; facilitates the endocytosis of SLC9A5 from the plasma membrane. Interacts with RACK1; this interaction positively regulates SLC9A5 activity and promotes SLC9A5 localization to focal adhesions. Interacts with SCAMP2; this interaction regulates SLC9A5 cell-surface targeting and SLC9A5 activity. In terms of processing, phosphorylated by PRKAA2; promotes its accumulation at the cell surface. Phosphorylated by CSNK2A1 in a manner favoring its beta-arrestin binding and endocytosis. As to expression, mainly expressed in brain. Expressed in neurons of the central and peripheral nervous system. Expressed also in testis, spleen, and skeletal muscle.

The protein localises to the cell membrane. It localises to the recycling endosome membrane. The protein resides in the cell projection. It is found in the dendritic spine membrane. Its subcellular location is the synaptic cell membrane. The protein localises to the cell junction. It localises to the focal adhesion. The catalysed reaction is Na(+)(in) + H(+)(out) = Na(+)(out) + H(+)(in). Its activity is regulated as follows. ATP-depletion almost completely abolishes SLC9A5 activity. Inhibited by amiloride compounds. Functionally, plasma membrane Na(+)/H(+) antiporter. Mediates the electroneutral exchange of intracellular H(+) ions for extracellular Na(+) in 1:1 stoichiometry, thus regulating intracellular pH homeostasis, in particular in neural tissues. Acts as a negative regulator of dendritic spine growth. Plays a role in postsynaptic remodeling and signaling. Can also contribute to organellar pH regulation, with consequences for receptor tyrosine kinase trafficking. The chain is Sodium/hydrogen exchanger 5 from Homo sapiens (Human).